A 281-amino-acid chain; its full sequence is Large ribosomal subunit protein uL2 (281 aa).

Positions 215–281 are disordered; sequence LGRRPHTRGV…RRNNRKDSKK (67 aa). A compositionally biased stretch (basic and acidic residues) spans 258 to 269; that stretch reads KTRDNKSTDKFI. A compositionally biased stretch (basic residues) spans 270–281; sequence VRRRNNRKDSKK.

It belongs to the universal ribosomal protein uL2 family. In terms of assembly, part of the 50S ribosomal subunit. Forms a bridge to the 30S subunit in the 70S ribosome.

Functionally, one of the primary rRNA binding proteins. Required for association of the 30S and 50S subunits to form the 70S ribosome, for tRNA binding and peptide bond formation. It has been suggested to have peptidyltransferase activity; this is somewhat controversial. Makes several contacts with the 16S rRNA in the 70S ribosome. This Pelagibacter ubique (strain HTCC1062) protein is Large ribosomal subunit protein uL2.